We begin with the raw amino-acid sequence, 314 residues long: 2,3-dihydroxyphenylpropionate/2,3-dihydroxicinnamic acid 1,2-dioxygenase (314 aa).

The Proton donor role is filled by His115. Catalysis depends on His179, which acts as the Proton acceptor.

This sequence belongs to the LigB/MhpB extradiol dioxygenase family. As to quaternary structure, homotetramer. The cofactor is Fe(2+).

The enzyme catalyses 3-(2,3-dihydroxyphenyl)propanoate + O2 = (2Z,4E)-2-hydroxy-6-oxonona-2,4-dienedioate + H(+). It catalyses the reaction (2E)-3-(2,3-dihydroxyphenyl)prop-2-enoate + O2 = (2Z,4E,7E)-2-hydroxy-6-oxonona-2,4,7-trienedioate + H(+). It functions in the pathway aromatic compound metabolism; 3-phenylpropanoate degradation. Its function is as follows. Catalyzes the non-heme iron(II)-dependent oxidative cleavage of 2,3-dihydroxyphenylpropionic acid and 2,3-dihydroxicinnamic acid into 2-hydroxy-6-ketononadienedioate and 2-hydroxy-6-ketononatrienedioate, respectively. This is 2,3-dihydroxyphenylpropionate/2,3-dihydroxicinnamic acid 1,2-dioxygenase from Rhodococcus jostii (strain RHA1).